The chain runs to 124 residues: UPF0102 protein MSMEG_2508/MSMEI_2448 (124 aa).

The protein belongs to the UPF0102 family.

This is UPF0102 protein MSMEG_2508/MSMEI_2448 from Mycolicibacterium smegmatis (strain ATCC 700084 / mc(2)155) (Mycobacterium smegmatis).